The following is a 308-amino-acid chain: Spermidine synthase 2 (308 aa).

The region spanning 17–254 is the PABS domain; it reads PGWFSEISPL…GVIGFMLCST (238 aa). Glutamine 48 is an S-adenosyl 3-(methylsulfanyl)propylamine binding site. Tyrosine 78 serves as a coordination point for putrescine. S-adenosyl 3-(methylsulfanyl)propylamine-binding positions include glutamine 79, aspartate 103, glutamate 123, 154–155, and aspartate 173; that span reads DG. Aspartate 173 serves as the catalytic Proton acceptor. Residues 173 to 176 and tyrosine 242 contribute to the putrescine site; that span reads DSSD.

The protein belongs to the spermidine/spermine synthase family.

The enzyme catalyses S-adenosyl 3-(methylsulfanyl)propylamine + putrescine = S-methyl-5'-thioadenosine + spermidine + H(+). It functions in the pathway amine and polyamine biosynthesis; spermidine biosynthesis; spermidine from putrescine: step 1/1. The chain is Spermidine synthase 2 from Hyoscyamus niger (Black henbane).